A 485-amino-acid polypeptide reads, in one-letter code: Malonate-semialdehyde dehydrogenase (485 aa).

Phe155, Lys179, Glu182, Arg183, and Ser232 together coordinate NAD(+). Cys287 (nucleophile) is an active-site residue. Glu386 contacts NAD(+).

This sequence belongs to the aldehyde dehydrogenase family. IolA subfamily. Homotetramer.

It catalyses the reaction 3-oxopropanoate + NAD(+) + CoA + H2O = hydrogencarbonate + acetyl-CoA + NADH + H(+). The enzyme catalyses 2-methyl-3-oxopropanoate + NAD(+) + CoA + H2O = propanoyl-CoA + hydrogencarbonate + NADH + H(+). It functions in the pathway polyol metabolism; myo-inositol degradation into acetyl-CoA; acetyl-CoA from myo-inositol: step 7/7. In terms of biological role, catalyzes the oxidation of malonate semialdehyde (MSA) and methylmalonate semialdehyde (MMSA) into acetyl-CoA and propanoyl-CoA, respectively. Is involved in a myo-inositol catabolic pathway. Bicarbonate, and not CO2, is the end-product of the enzymatic reaction. This Halalkalibacterium halodurans (strain ATCC BAA-125 / DSM 18197 / FERM 7344 / JCM 9153 / C-125) (Bacillus halodurans) protein is Malonate-semialdehyde dehydrogenase.